Here is a 1496-residue protein sequence, read N- to C-terminus: Chromosome partition protein MukB (1496 aa).

63–70 serves as a coordination point for ATP; sequence GGNGAGKS. Coiled coils occupy residues 328-493 and 536-632; these read KLEL…QRLS and KMQA…APAW. Residues 694 to 811 are flexible hinge; that stretch reads PDGSDDVRLN…EVPLFGRAAR (118 aa). Coiled-coil stretches lie at residues 861-1171 and 1235-1291; these read NPEE…SAEE and IDAI…LQNI. Positions 1082–1091 are enriched in basic and acidic residues; sequence RARSRRDELQ. Residues 1082-1101 form a disordered region; that stretch reads RARSRRDELQQRLSQQRSRK.

Belongs to the SMC family. MukB subfamily. Homodimerization via its hinge domain. Binds to DNA via its C-terminal region. Interacts, and probably forms a ternary complex, with MukE and MukF via its C-terminal region. The complex formation is stimulated by calcium or magnesium. Interacts with tubulin-related protein FtsZ.

Its subcellular location is the cytoplasm. It is found in the nucleoid. Plays a central role in chromosome condensation, segregation and cell cycle progression. Functions as a homodimer, which is essential for chromosome partition. Involved in negative DNA supercoiling in vivo, and by this means organize and compact chromosomes. May achieve or facilitate chromosome segregation by condensation DNA from both sides of a centrally located replisome during cell division. This is Chromosome partition protein MukB from Actinobacillus pleuropneumoniae serotype 7 (strain AP76).